The sequence spans 498 residues: Glycerol kinase (498 aa).

Thr12 contacts ADP. 3 residues coordinate ATP: Thr12, Thr13, and Ser14. Thr12 is a sn-glycerol 3-phosphate binding site. Arg16 lines the ADP pocket. The sn-glycerol 3-phosphate site is built by Arg82, Glu83, and Tyr134. The glycerol site is built by Arg82, Glu83, and Tyr134. Phosphohistidine; by HPr is present on His230. Position 244 (Asp244) interacts with sn-glycerol 3-phosphate. Glycerol is bound by residues Asp244 and Gln245. Residues Thr266 and Gly309 each coordinate ADP. Residues Thr266, Gly309, Gln313, and Gly410 each contribute to the ATP site. ADP-binding residues include Gly410 and Asn414.

Belongs to the FGGY kinase family. As to quaternary structure, homotetramer and homodimer (in equilibrium). Post-translationally, the phosphoenolpyruvate-dependent sugar phosphotransferase system (PTS), including enzyme I, and histidine-containing protein (HPr) are required for the phosphorylation, which leads to the activation of the enzyme.

The catalysed reaction is glycerol + ATP = sn-glycerol 3-phosphate + ADP + H(+). The protein operates within polyol metabolism; glycerol degradation via glycerol kinase pathway; sn-glycerol 3-phosphate from glycerol: step 1/1. Activated by phosphorylation and inhibited by fructose 1,6-bisphosphate (FBP). Its function is as follows. Key enzyme in the regulation of glycerol uptake and metabolism. Catalyzes the phosphorylation of glycerol to yield sn-glycerol 3-phosphate. The sequence is that of Glycerol kinase from Staphylococcus aureus (strain bovine RF122 / ET3-1).